Reading from the N-terminus, the 309-residue chain is MRRKKISIVGAGNVGATCAHWIAAKELGDIVLLDVAEGVPQGKALDLMEAAPVEGFDCMITGTNDYRDTAGSDVAVITAGVARKPGMSRDDLVSINVKIVRQAAAEIARYSPDALIIVVTNPLDVMCYVAYKASGLPRGKVFGMSGILDGARFRTFVALELGISFEDVTTLVLGGHGDHMVPLVRYTYAGAIPVEKLIPADRLAELVQRTRQGGAEIVELLKTGSAYYAPGAAITQMLEAVLKDKKRILPCAAYLDGEYGHRDICAGVPTIVGAGGIERIIELELTAEEQAAFDRSVSAVRGVLKGLDI.

NAD(+) is bound by residues 10-15 (GAGNVG) and Asp-34. Substrate is bound by residues Arg-83 and Arg-89. NAD(+)-binding positions include Asn-96 and 119–121 (VTN). Substrate contacts are provided by Asn-121 and Arg-152. The active-site Proton acceptor is the His-176.

Belongs to the LDH/MDH superfamily. MDH type 3 family.

The enzyme catalyses (S)-malate + NAD(+) = oxaloacetate + NADH + H(+). Functionally, catalyzes the reversible oxidation of malate to oxaloacetate. In Desulforudis audaxviator (strain MP104C), this protein is Malate dehydrogenase.